A 227-amino-acid polypeptide reads, in one-letter code: Thymidylate kinase (227 aa).

16-23 is a binding site for ATP; sequence GIDGAGKT.

Belongs to the thymidylate kinase family.

It catalyses the reaction dTMP + ATP = dTDP + ADP. Phosphorylation of dTMP to form dTDP in both de novo and salvage pathways of dTTP synthesis. This is Thymidylate kinase from Xanthomonas campestris pv. campestris (strain 8004).